Reading from the N-terminus, the 31-residue chain is Acetyl-CoA carboxylase (31 aa).

The tract at residues 1–31 is disordered; the sequence is RISSSVIAHKTQLDSGKREVYSSHMQLGGPK. A compositionally biased stretch (basic and acidic residues) spans 11 to 21; that stretch reads TQLDSGKREVY.

It carries out the reaction hydrogencarbonate + acetyl-CoA + ATP = malonyl-CoA + ADP + phosphate + H(+). It functions in the pathway lipid metabolism; malonyl-CoA biosynthesis; malonyl-CoA from acetyl-CoA: step 1/1. This is Acetyl-CoA carboxylase from Catharanthus roseus (Madagascar periwinkle).